Consider the following 531-residue polypeptide: Beta-hexosaminidase subunit beta (531 aa).

The first 24 residues, 1 to 24 (MRHRGLGLAALLALLAAVAPRSSA), serve as a signal peptide directing secretion. Asparagine 50 carries an N-linked (GlcNAc...) asparagine glycan. Residues cysteine 65 and cysteine 111 are joined by a disulfide bond. Residues asparagine 116, asparagine 164, and asparagine 301 are each glycosylated (N-linked (GlcNAc...) asparagine). Intrachain disulfides connect cysteine 283–cysteine 334 and cysteine 508–cysteine 525. Glutamate 329 functions as the Proton donor in the catalytic mechanism.

The protein belongs to the glycosyl hydrolase 20 family. As to quaternary structure, there are 3 forms of beta-hexosaminidase: hexosaminidase A is a heterodimer composed of one subunit alpha and one subunit beta (chain A and B); hexosaminidase B is a homodimer of two beta subunits (two chains A and B); hexosaminidase S is a homodimer of two alpha subunits. The composition of the dimer (isozyme A versus isozyme S) has a significant effect on the substrate specificity of the alpha subunit active site.

It is found in the lysosome. It localises to the cytoplasmic vesicle. Its subcellular location is the secretory vesicle. The protein resides in the cortical granule. The enzyme catalyses Hydrolysis of terminal non-reducing N-acetyl-D-hexosamine residues in N-acetyl-beta-D-hexosaminides.. The catalysed reaction is N-acetyl-beta-D-galactosaminyl-(1-&gt;4)-beta-D-3-sulfogalactosyl-(1-&gt;4)-beta-D-glucosyl-(1&lt;-&gt;1')-ceramide + H2O = a beta-D-3-sulfogalactosyl-(1-&gt;4)-beta-D-glucosyl-(1&lt;-&gt;1')-ceramide + N-acetyl-beta-D-galactosamine. It catalyses the reaction a ganglioside GM2 (d18:1(4E)) + H2O = a ganglioside GM3 (d18:1(4E)) + N-acetyl-beta-D-galactosamine. It carries out the reaction a ganglioside GM2 + H2O = a ganglioside GM3 + N-acetyl-beta-D-galactosamine. The enzyme catalyses beta-D-GalNAc-(1-&gt;4)-alpha-L-IdoA-(1-&gt;3)-beta-D-GalNAc-4-sulfate-(1-&gt;4)-alpha-L-IdoA-(1-&gt;3)-D-GalNAc-4-sulfate + H2O = alpha-L-IdoA-(1-&gt;3)-beta-D-GalNAc-4-sulfate-(1-&gt;4)-alpha-L-IdoA-(1-&gt;3)-D-GalNAc-4-sulfate + N-acetyl-D-galactosamine. The catalysed reaction is N-acetyl-beta-D-6-sulfogalactosaminyl-(1-&gt;4)-alpha-L-iduronyl-(1-&gt;3)-N-acetyl-D-6-sulfogalactosamine + H2O = alpha-L-iduronyl-(1-&gt;3)-N-acetyl-D-6-sulfogalactosamine + N-acetyl-D-6-sulfogalactosamine. With respect to regulation, addition of GM2A stimulates the hydrolysis of sulfated glycosphingolipid SM2 and the ganglioside GM2. Its function is as follows. Hydrolyzes the non-reducing end N-acetyl-D-hexosamine and/or sulfated N-acetyl-D-hexosamine of glycoconjugates, such as the oligosaccharide moieties from proteins and neutral glycolipids, or from certain mucopolysaccharides. The isozyme B does not hydrolyze each of these substrates, however hydrolyzes efficiently neutral oligosaccharide. Only the isozyme A is responsible for the degradation of GM2 gangliosides in the presence of GM2A. During fertilization is responsible, at least in part, for the zona block to polyspermy. Present in the cortical granules of non-activated oocytes, is exocytosed during the cortical reaction in response to oocyte activation and inactivates the sperm galactosyltransferase-binding site, accounting for the block in sperm binding to the zona pellucida. This chain is Beta-hexosaminidase subunit beta, found in Felis catus (Cat).